The chain runs to 444 residues: Phosphoglucosamine mutase (444 aa).

The Phosphoserine intermediate role is filled by S102. The Mg(2+) site is built by S102, D241, D243, and D245. A Phosphoserine modification is found at S102.

It belongs to the phosphohexose mutase family. Requires Mg(2+) as cofactor. In terms of processing, activated by phosphorylation.

The enzyme catalyses alpha-D-glucosamine 1-phosphate = D-glucosamine 6-phosphate. Its function is as follows. Catalyzes the conversion of glucosamine-6-phosphate to glucosamine-1-phosphate. The polypeptide is Phosphoglucosamine mutase (Mannheimia succiniciproducens (strain KCTC 0769BP / MBEL55E)).